Here is a 322-residue protein sequence, read N- to C-terminus: Probable cardiolipin synthase (CMP-forming) (322 aa).

The next 3 helical transmembrane spans lie at 143–163 (IGYV…AFAG), 199–219 (LVIS…IVVF), and 289–309 (LQGL…SYVM).

This sequence belongs to the CDP-alcohol phosphatidyltransferase class-I family.

It is found in the mitochondrion inner membrane. It catalyses the reaction a CDP-1,2-diacyl-sn-glycerol + a 1,2-diacyl-sn-glycero-3-phospho-(1'-sn-glycerol) = a cardiolipin + CMP + H(+). Its function is as follows. Catalyzes the synthesis of cardiolipin (CL) (diphosphatidylglycerol) by specifically transferring a phosphatidyl group from CDP-diacylglycerol to phosphatidylglycerol (PG). CL is a key phospholipid in mitochondrial membranes and plays important roles in maintaining the functional integrity and dynamics of mitochondria under both optimal and stress conditions. This Drosophila melanogaster (Fruit fly) protein is Probable cardiolipin synthase (CMP-forming) (CLS).